The primary structure comprises 377 residues: UPF0754 membrane protein BPUM_0927 (377 aa).

2 helical membrane-spanning segments follow: residues 1–21 and 357–377; these read MNIFTTFLFMIVIGAVIGAAT and FLGGFLGGLIGAIQAIFVTLF.

It belongs to the UPF0754 family.

The protein resides in the cell membrane. The chain is UPF0754 membrane protein BPUM_0927 from Bacillus pumilus (strain SAFR-032).